A 588-amino-acid chain; its full sequence is Phosphomethylpyrimidine synthase (588 aa).

Substrate contacts are provided by residues asparagine 212, methionine 241, tyrosine 270, histidine 306, 326–328, 367–370, and glutamate 406; these read SRG and DGLR. Residue histidine 410 coordinates Zn(2+). Position 433 (tyrosine 433) interacts with substrate. Histidine 474 contributes to the Zn(2+) binding site. 3 residues coordinate [4Fe-4S] cluster: cysteine 554, cysteine 557, and cysteine 562.

Belongs to the ThiC family. As to quaternary structure, homodimer. The cofactor is [4Fe-4S] cluster.

It carries out the reaction 5-amino-1-(5-phospho-beta-D-ribosyl)imidazole + S-adenosyl-L-methionine = 4-amino-2-methyl-5-(phosphooxymethyl)pyrimidine + CO + 5'-deoxyadenosine + formate + L-methionine + 3 H(+). It functions in the pathway cofactor biosynthesis; thiamine diphosphate biosynthesis. Functionally, catalyzes the synthesis of the hydroxymethylpyrimidine phosphate (HMP-P) moiety of thiamine from aminoimidazole ribotide (AIR) in a radical S-adenosyl-L-methionine (SAM)-dependent reaction. The chain is Phosphomethylpyrimidine synthase from Bartonella quintana (strain Toulouse) (Rochalimaea quintana).